A 381-amino-acid chain; its full sequence is DNA dC-&gt;dU-editing enzyme APOBEC-3G (381 aa).

Residues 1–62 (MKPQTRNTVV…ANIFQGQVSF (62 aa)) form an essential for cytoplasmic localization region. 2 CMP/dCMP-type deaminase domains span residues 29–143 (HRNT…SQTG) and 211–325 (GQHQ…LRRL). Position 32 is a phosphothreonine; by PKA (Thr32). The Zn(2+) site is built by His67, Cys98, and Cys101. A necessary for homooligomerization region spans residues 206–333 (DPSVLGQHQS…RLDRAGTPIS (128 aa)). The interaction with DNA stretch occupies residues 210–212 (LGQ). His254 is a Zn(2+) binding site. Glu256 functions as the Proton donor in the catalytic mechanism. Zn(2+) contacts are provided by Cys285 and Cys288. The interval 310-317 (RIYDYQRG) is interaction with DNA.

This sequence belongs to the cytidine and deoxycytidylate deaminase family. Homodimer. Homooligomer. Can bind RNA to form ribonucleoprotein complexes of high-molecular-mass (HMM) or low-molecular-mass (LMM). HMM is inactive and heterogeneous in protein composition because of binding nonselectively to cellular RNAs, which in turn are associated with variety of cellular proteins. The LMM form which is enzymatically active has few or no RNAs associated. Its ability to form homooligomer is distinct from its ability to assemble into HMM. Interacts with APOBEC3B, APOBEC3F, MOV10, AGO2, EIF4E, EIF4ENIF1, DCP2 and DDX6 in an RNA-dependent manner. Interacts with AGO1, AGO3 and PKA/PRKACA. Requires Zn(2+) as cofactor.

It is found in the cytoplasm. The protein resides in the nucleus. It localises to the P-body. The catalysed reaction is a 2'-deoxycytidine in single-stranded DNA + H2O + H(+) = a 2'-deoxyuridine in single-stranded DNA + NH4(+). Its function is as follows. DNA deaminase (cytidine deaminase) which acts as an inhibitor of retrovirus replication and retrotransposon mobility. After the penetration of retroviral nucleocapsids into target cells of infection and the initiation of reverse transcription, it can induce the conversion of cytosine to uracil in the minus-sense single-strand viral DNA, leading to G-to-A hypermutations in the subsequent plus-strand viral DNA. The resultant detrimental levels of mutations in the proviral genome, along with a deamination-independent mechanism that works prior to the proviral integration, together exert efficient antiretroviral effects in infected target cells. Selectively targets single-stranded DNA and does not deaminate double-stranded DNA or single- or double-stranded RNA. In Lagothrix lagotricha (Brown woolly monkey), this protein is DNA dC-&gt;dU-editing enzyme APOBEC-3G (APOBEC3G).